Here is a 112-residue protein sequence, read N- to C-terminus: Toxin-like structure LSTX-D10 (112 aa).

Positions 1–20 are cleaved as a signal peptide; sequence MMKVLVVVALLVTLISYSSS. Positions 21-41 are excised as a propeptide; sequence EGIDDLEADELLSLMANEQTR. 4 cysteine pairs are disulfide-bonded: Cys45/Cys60, Cys52/Cys69, Cys59/Cys84, and Cys71/Cys82.

The protein belongs to the neurotoxin 19 (CSTX) family. 01 subfamily. As to expression, expressed by the venom gland.

It is found in the secreted. This Lycosa singoriensis (Wolf spider) protein is Toxin-like structure LSTX-D10.